The following is a 385-amino-acid chain: MSKRDYYEVLGVAKTASESELKVAFRKLAMVHHPDRNPGDKEAEIKFKEVNEAYQCLSDGQKRAAYDRFGHAAFSQGGAGGPGFGNEFGDFMSDIFENFFGDGRAAPGGGAGRGRGGAPGRERGSDLRYNLEISLEEAFAGKTETIRIPTSIACETCSGTGAKAGSKPRTCSTCGGYGRVRAAQGFFAIERTCPNCHGRGEVVDDPCTACSGAGRVNRERTLSINVPAGVDDGLRIRLAGEGESGMRGGPAGDLYVFLSIKPHPFFQRDGADLFCRVPISMVTAALSGEITVPVIDGSQTQVRIPAGTQTGKQFRIKSKGMPVLRSREVGDLYIQVSVETPQNLTKRQRELLQEFDQSASDENHPESAGFFSKVRDFFVSGATRA.

A J domain is found at 5–70 (DYYEVLGVAK…QKRAAYDRFG (66 aa)). A CR-type zinc finger spans residues 141-219 (GKTETIRIPT…CSGAGRVNRE (79 aa)). Cys-154, Cys-157, Cys-171, Cys-174, Cys-193, Cys-196, Cys-207, and Cys-210 together coordinate Zn(2+). 4 CXXCXGXG motif repeats span residues 154 to 161 (CETCSGTG), 171 to 178 (CSTCGGYG), 193 to 200 (CPNCHGRG), and 207 to 214 (CTACSGAG).

The protein belongs to the DnaJ family. Homodimer. It depends on Zn(2+) as a cofactor.

It localises to the cytoplasm. In terms of biological role, participates actively in the response to hyperosmotic and heat shock by preventing the aggregation of stress-denatured proteins and by disaggregating proteins, also in an autonomous, DnaK-independent fashion. Unfolded proteins bind initially to DnaJ; upon interaction with the DnaJ-bound protein, DnaK hydrolyzes its bound ATP, resulting in the formation of a stable complex. GrpE releases ADP from DnaK; ATP binding to DnaK triggers the release of the substrate protein, thus completing the reaction cycle. Several rounds of ATP-dependent interactions between DnaJ, DnaK and GrpE are required for fully efficient folding. Also involved, together with DnaK and GrpE, in the DNA replication of plasmids through activation of initiation proteins. This is Chaperone protein DnaJ from Methylorubrum extorquens (strain PA1) (Methylobacterium extorquens).